Consider the following 78-residue polypeptide: Small ribosomal subunit protein uS15c (78 aa).

The protein belongs to the universal ribosomal protein uS15 family. Part of the 30S ribosomal subunit.

The protein localises to the plastid. It localises to the chloroplast. The protein is Small ribosomal subunit protein uS15c (rps15-A) of Saccharum officinarum (Sugarcane).